Consider the following 648-residue polypeptide: Activatory protein CHA4 (648 aa).

Residues M1 to L10 are compositionally biased toward pro residues. The tract at residues M1 to P37 is disordered. Low complexity predominate over residues T11–L22. The zn(2)-C6 fungal-type DNA-binding region spans C44–C70. Positions A140–P177 are disordered. 2 positions are modified to phosphoserine: S164 and S166.

Its subcellular location is the nucleus. Its function is as follows. Activates the CHA1 gene for L-serine dehydratase. Binds to the DNA sequence 5'-GVGGARAYRTRATTCCRC-3'. In Saccharomyces cerevisiae (strain ATCC 204508 / S288c) (Baker's yeast), this protein is Activatory protein CHA4 (CHA4).